We begin with the raw amino-acid sequence, 331 residues long: Small ribosomal subunit protein uS2 (331 aa).

The protein belongs to the universal ribosomal protein uS2 family.

The sequence is that of Small ribosomal subunit protein uS2 from Rhodopseudomonas palustris (strain ATCC BAA-98 / CGA009).